The following is a 368-amino-acid chain: L-cysteine desulfhydrase Cds1 (368 aa).

K67 carries the post-translational modification N6-(pyridoxal phosphate)lysine. Pyridoxal 5'-phosphate contacts are provided by residues 203–207 and S299; that span reads GTGGT.

It belongs to the cysteine synthase/cystathionine beta-synthase family. Cds1 subfamily. Pyridoxal 5'-phosphate is required as a cofactor.

The protein resides in the cytoplasm. It catalyses the reaction L-cysteine + H2O = hydrogen sulfide + pyruvate + NH4(+) + H(+). Its function is as follows. A cysteine desulfhydrase that generates hydrogen sulfide, H(2)S. The H(2)S produced by this enzyme stimulates respiration in M.tuberculosis, mediated primarily via cytochrome bd with a lesser contribution from cytochrome bc1/aa3. H(2)S modulates the balance between respiration and glycolysis, and also contributes to redox homeostasis. Probably eliminates toxic levels of Cys (which can induce oxidative stress). This is L-cysteine desulfhydrase Cds1 from Mycobacterium tuberculosis (strain ATCC 25177 / H37Ra).